We begin with the raw amino-acid sequence, 177 residues long: B-phycoerythrin beta chain (177 aa).

Residues lysine 28, asparagine 35, aspartate 39, cysteine 50, aspartate 54, cysteine 61, asparagine 72, 77–78 (RR), cysteine 82, arginine 129, 147–148 (SQ), 154–158 (PQGDC), and cysteine 158 contribute to the (2R,3E)-phycoerythrobilin site. N4-methylasparagine is present on asparagine 72.

Belongs to the phycobiliprotein family. As to quaternary structure, heterotetramer of 2 different alpha chains and 2 identical beta chains. The subunit composition could comprise any combination of 2 out of 4 different alpha units with an invariant beta unit. Post-translationally, contains three covalently linked phycoerythrobilin chromophores.

The protein resides in the plastid. It is found in the chloroplast thylakoid membrane. Light-harvesting photosynthetic tetrapyrrole chromophore-protein from the phycobiliprotein complex. The protein is B-phycoerythrin beta chain (cpeB) of Rhodomonas sp. (strain CS 24) (Chroomonas sp. (strain CS24)).